A 425-amino-acid chain; its full sequence is 5-nitroanthranilic acid aminohydrolase (425 aa).

Asp88 is an active-site residue. The active-site Proton acceptor is Glu158.

This sequence belongs to the peptidase M20A family. Co(2+) is required as a cofactor. Mn(2+) serves as cofactor. Requires Zn(2+) as cofactor. It depends on Fe(2+) as a cofactor. The cofactor is Ni(2+).

The enzyme catalyses 5-nitroanthranilate + H2O + H(+) = 5-nitrosalicylate + NH4(+). Functionally, catalyzes the deamination of 5-nitroanthranilate (5NAA) to 5-nitrosalicylate (5NSA), the first step in biodegradation of 5-nitroanthranilate. This chain is 5-nitroanthranilic acid aminohydrolase (naaA), found in Bradyrhizobium sp.